Consider the following 247-residue polypeptide: Enolase-phosphatase E1 (247 aa).

It belongs to the HAD-like hydrolase superfamily. MasA/MtnC family. Monomer. Mg(2+) is required as a cofactor.

It catalyses the reaction 5-methylsulfanyl-2,3-dioxopentyl phosphate + H2O = 1,2-dihydroxy-5-(methylsulfanyl)pent-1-en-3-one + phosphate. It functions in the pathway amino-acid biosynthesis; L-methionine biosynthesis via salvage pathway; L-methionine from S-methyl-5-thio-alpha-D-ribose 1-phosphate: step 3/6. It participates in amino-acid biosynthesis; L-methionine biosynthesis via salvage pathway; L-methionine from S-methyl-5-thio-alpha-D-ribose 1-phosphate: step 4/6. In terms of biological role, bifunctional enzyme that catalyzes the enolization of 2,3-diketo-5-methylthiopentyl-1-phosphate (DK-MTP-1-P) into the intermediate 2-hydroxy-3-keto-5-methylthiopentenyl-1-phosphate (HK-MTPenyl-1-P), which is then dephosphorylated to form the acireductone 1,2-dihydroxy-3-keto-5-methylthiopentene (DHK-MTPene). The sequence is that of Enolase-phosphatase E1 from Leptospira biflexa serovar Patoc (strain Patoc 1 / Ames).